Consider the following 199-residue polypeptide: NAD(P)H dehydrogenase (quinone) (199 aa).

A Flavodoxin-like domain is found at 4–190 (MLVLYYSAYG…DGARFQGRRV (187 aa)). FMN contacts are provided by residues 10–15 (SAYGYM) and 78–80 (TRY). Residue Tyr12 coordinates NAD(+). Trp98 lines the substrate pocket. FMN-binding positions include 113–119 (STATQHG) and His134. The interval 157 to 181 (GGAPYGMTTTADGDGSRQPSAQELD) is disordered. Residues 163 to 177 (MTTTADGDGSRQPSA) are compositionally biased toward polar residues.

This sequence belongs to the WrbA family. FMN serves as cofactor.

It catalyses the reaction a quinone + NADH + H(+) = a quinol + NAD(+). The enzyme catalyses a quinone + NADPH + H(+) = a quinol + NADP(+). The sequence is that of NAD(P)H dehydrogenase (quinone) from Brucella melitensis biotype 2 (strain ATCC 23457).